Here is a 533-residue protein sequence, read N- to C-terminus: Probable intron-encoded endonuclease 3 (533 aa).

3 helical membrane-spanning segments follow: residues 1–21, 30–50, and 81–101; these read MYLS…FFGR, LITC…FFEV, and LTVA…IYSI. The segment at 1–108 is ndh-5 exon 1 encoded; the sequence is MYLSIIILPL…YSISYMSHDP (108 aa). Positions 109 to 533 are ndh-5 intron 1 encoded; the sequence is RGRVRGKRVY…SISLLLGRRR (425 aa).

It in the N-terminal section; belongs to the complex I subunit 5 family. The protein in the C-terminal section; belongs to the LAGLIDADG endonuclease family.

Its subcellular location is the mitochondrion membrane. Its function is as follows. Mitochondrial DNA endonuclease involved in intron homing. The protein is Probable intron-encoded endonuclease 3 of Neurospora crassa (strain ATCC 24698 / 74-OR23-1A / CBS 708.71 / DSM 1257 / FGSC 987).